Here is a 275-residue protein sequence, read N- to C-terminus: MPLIKFKPTSPGRRSAARVVTPNIHKGSPHASLLESQSKTGGRNHHGRITVRHIGGGCKQRYRVIDFKRDKEAIPARVERIEYDPNRTAHIALLCYIDGERCYIIAPKGLKEGDKIISGPNVPIKLGNSLPLRNIPVGTTVHAVELKPRKGAQMARSAGSSVQLVAREGVYATLRLRSGEMRRVLAECRATIGEVGNEEHNLRKLGKAGAKRWLGVRPTVRGAAMNPVDHPHGGGEAKSGQGNPHPVTPWGVPTKGYKTRKNKRTQQFIIRGRRG.

Disordered stretches follow at residues 24–47 and 227–261; these read IHKG…NHHG and PVDH…KTRK.

The protein belongs to the universal ribosomal protein uL2 family. In terms of assembly, part of the 50S ribosomal subunit. Forms a bridge to the 30S subunit in the 70S ribosome.

One of the primary rRNA binding proteins. Required for association of the 30S and 50S subunits to form the 70S ribosome, for tRNA binding and peptide bond formation. It has been suggested to have peptidyltransferase activity; this is somewhat controversial. Makes several contacts with the 16S rRNA in the 70S ribosome. In Xylella fastidiosa (strain M12), this protein is Large ribosomal subunit protein uL2.